Consider the following 368-residue polypeptide: Ribosomal RNA large subunit methyltransferase M (368 aa).

Residues Ser-189, 222–225 (CPGG), Asp-241, Asp-261, and Asp-278 each bind S-adenosyl-L-methionine. Lys-307 (proton acceptor) is an active-site residue.

The protein belongs to the class I-like SAM-binding methyltransferase superfamily. RNA methyltransferase RlmE family. RlmM subfamily. As to quaternary structure, monomer.

It is found in the cytoplasm. It catalyses the reaction cytidine(2498) in 23S rRNA + S-adenosyl-L-methionine = 2'-O-methylcytidine(2498) in 23S rRNA + S-adenosyl-L-homocysteine + H(+). Its function is as follows. Catalyzes the 2'-O-methylation at nucleotide C2498 in 23S rRNA. In Yersinia pseudotuberculosis serotype O:1b (strain IP 31758), this protein is Ribosomal RNA large subunit methyltransferase M.